We begin with the raw amino-acid sequence, 64 residues long: Large ribosomal subunit protein bL33 (64 aa).

This sequence belongs to the bacterial ribosomal protein bL33 family.

The chain is Large ribosomal subunit protein bL33 from Synechococcus sp. (strain JA-2-3B'a(2-13)) (Cyanobacteria bacterium Yellowstone B-Prime).